The following is a 179-amino-acid chain: MEKEGVTMVINFEELHPNERAELERNIFFSTLEQLKGWARSNSLWPMTFGLACCAIEMMGVGSSHYDLDRFGSFFRTSPRQSDVMIVSGTVTKKMAPIVRRLYDQMPEPKWVIAMGSCATAGGPYVNSYAVVKGVDQIVPVDVYIPGCPPNPAALIYGINKLKEKIRYEAKTGKQVTNK.

Residues Cys-53, Cys-54, Cys-118, and Cys-148 each coordinate [4Fe-4S] cluster.

The protein belongs to the complex I 20 kDa subunit family. In terms of assembly, NDH-1 is composed of 14 different subunits. Subunits NuoB, C, D, E, F, and G constitute the peripheral sector of the complex. The cofactor is [4Fe-4S] cluster.

The protein localises to the cell membrane. It catalyses the reaction a quinone + NADH + 5 H(+)(in) = a quinol + NAD(+) + 4 H(+)(out). Functionally, NDH-1 shuttles electrons from NADH, via FMN and iron-sulfur (Fe-S) centers, to quinones in the respiratory chain. The immediate electron acceptor for the enzyme in this species is believed to be a menaquinone. Couples the redox reaction to proton translocation (for every two electrons transferred, four hydrogen ions are translocated across the cytoplasmic membrane), and thus conserves the redox energy in a proton gradient. The sequence is that of NADH-quinone oxidoreductase subunit B from Bacillus thuringiensis (strain Al Hakam).